Here is a 595-residue protein sequence, read N- to C-terminus: Phytoene desaturase (595 aa).

The N-terminal stretch at 1 to 23 is a signal peptide; it reads MAETQRPRSAIIVGAGAGGIAVA. Residues 574-594 traverse the membrane as a helical segment; it reads SQRAFPLLVALMGVLYFLLFV.

Belongs to the carotenoid/retinoid oxidoreductase family. It depends on NAD(+) as a cofactor.

It localises to the membrane. The enzyme catalyses 15-cis-phytoene + A = all-trans-phytofluene + AH2. It carries out the reaction all-trans-phytofluene + A = all-trans-zeta-carotene + AH2. It catalyses the reaction all-trans-zeta-carotene + A = all-trans-neurosporene + AH2. The catalysed reaction is all-trans-neurosporene + A = all-trans-lycopene + AH2. The enzyme catalyses all-trans-lycopene + A = all-trans-3,4-didehydrolycopene + AH2. It participates in carotenoid biosynthesis; lycopene biosynthesis. Its function is as follows. Phytoene desaturase involved in the carotenoid biosynthesis pathway. Converts phytoene into 3,4-didehydrolycopene via the intermediates phytofluene, zeta-carotene, neurosporene and lycopene, by introducing up to five double bonds into phytoene. Is also able to desaturate 1-hydroxyneurosporene into 1-hydroxylycopene and 1-hydroxylycopene into 1-hydroxy-3,4-didehydrolycopene. Gamma-carotene and 1,19-dihydroxylycopene are not accepted as substrates. Neurosporaxanthin is synthesized from geranyl-geranyl pyrophosphate (GGPP) through several enzymatic activities. Phytoene synthase activity performed by the bifunctional enzyme al-2 first produces phytoene from geranyl-geranyl pyrophosphate (GGPP). The phytoene dehydrogenase al-1 then introduces 5 desaturations to lead to 3,4-didehydrolycopene via the intermediates phytofluene, zeta-carotene, neurosporene and lycopene. Al-2 cyclase activity then converts 3,4-didehydrolycopene into torulene. Al-2 can also convet lycopene into gamma-carotene which in turn is converted to beta-carotene by an additional al-2 cyclization reaction. Torulene is the substrate of the dioxidase cao-2 that breaks the molecule, removing five carbon atoms to yield beta-apo-4'-carotenal, whereas the aldehyde dehydrogenase ylo-1 mediates the last step by converting beta-apo-4'-carotenal into neurosporaxanthin. This Neurospora crassa (strain ATCC 24698 / 74-OR23-1A / CBS 708.71 / DSM 1257 / FGSC 987) protein is Phytoene desaturase.